The chain runs to 618 residues: 1-deoxy-D-xylulose-5-phosphate synthase (618 aa).

Thiamine diphosphate contacts are provided by residues His-70 and 111–113 (GHS). Residue Asp-142 coordinates Mg(2+). Thiamine diphosphate is bound by residues 143-144 (GS), Asn-171, Tyr-278, and Glu-360. Asn-171 is a binding site for Mg(2+).

The protein belongs to the transketolase family. DXPS subfamily. In terms of assembly, homodimer. Mg(2+) serves as cofactor. The cofactor is thiamine diphosphate.

It catalyses the reaction D-glyceraldehyde 3-phosphate + pyruvate + H(+) = 1-deoxy-D-xylulose 5-phosphate + CO2. It functions in the pathway metabolic intermediate biosynthesis; 1-deoxy-D-xylulose 5-phosphate biosynthesis; 1-deoxy-D-xylulose 5-phosphate from D-glyceraldehyde 3-phosphate and pyruvate: step 1/1. Catalyzes the acyloin condensation reaction between C atoms 2 and 3 of pyruvate and glyceraldehyde 3-phosphate to yield 1-deoxy-D-xylulose-5-phosphate (DXP). The polypeptide is 1-deoxy-D-xylulose-5-phosphate synthase (Helicobacter pylori (strain HPAG1)).